The sequence spans 91 residues: Acylphosphatase (91 aa).

The Acylphosphatase-like domain maps to 6–91 (CMRCYISGRV…WKDYISFDVL (86 aa)). Residues arginine 21 and asparagine 39 contribute to the active site.

This sequence belongs to the acylphosphatase family.

The enzyme catalyses an acyl phosphate + H2O = a carboxylate + phosphate + H(+). The chain is Acylphosphatase (acyP) from Legionella pneumophila (strain Paris).